We begin with the raw amino-acid sequence, 115 residues long: Nucleoid-associated protein Pro_0020 (115 aa).

This sequence belongs to the YbaB/EbfC family. As to quaternary structure, homodimer.

It localises to the cytoplasm. It is found in the nucleoid. Its function is as follows. Binds to DNA and alters its conformation. May be involved in regulation of gene expression, nucleoid organization and DNA protection. This chain is Nucleoid-associated protein Pro_0020, found in Prochlorococcus marinus (strain SARG / CCMP1375 / SS120).